A 111-amino-acid polypeptide reads, in one-letter code: Putative pterin-4-alpha-carbinolamine dehydratase (111 aa).

It belongs to the pterin-4-alpha-carbinolamine dehydratase family.

The enzyme catalyses (4aS,6R)-4a-hydroxy-L-erythro-5,6,7,8-tetrahydrobiopterin = (6R)-L-erythro-6,7-dihydrobiopterin + H2O. The polypeptide is Putative pterin-4-alpha-carbinolamine dehydratase (Marinobacter nauticus (strain ATCC 700491 / DSM 11845 / VT8) (Marinobacter aquaeolei)).